The chain runs to 427 residues: Enolase (427 aa).

Gln163 is a (2R)-2-phosphoglycerate binding site. The active-site Proton donor is the Glu205. Mg(2+) is bound by residues Asp242, Glu285, and Asp312. (2R)-2-phosphoglycerate-binding residues include Lys337, Arg366, Ser367, and Lys388. Lys337 (proton acceptor) is an active-site residue.

It belongs to the enolase family. It depends on Mg(2+) as a cofactor.

The protein resides in the cytoplasm. Its subcellular location is the secreted. The protein localises to the cell surface. The catalysed reaction is (2R)-2-phosphoglycerate = phosphoenolpyruvate + H2O. It functions in the pathway carbohydrate degradation; glycolysis; pyruvate from D-glyceraldehyde 3-phosphate: step 4/5. Functionally, catalyzes the reversible conversion of 2-phosphoglycerate (2-PG) into phosphoenolpyruvate (PEP). It is essential for the degradation of carbohydrates via glycolysis. This is Enolase from Ralstonia nicotianae (strain ATCC BAA-1114 / GMI1000) (Ralstonia solanacearum).